Here is a 502-residue protein sequence, read N- to C-terminus: Probable cytosol aminopeptidase (502 aa).

Mn(2+)-binding residues include K270 and D275. K282 is an active-site residue. Mn(2+) is bound by residues D293, D352, and E354. Residue R356 is part of the active site.

This sequence belongs to the peptidase M17 family. Mn(2+) is required as a cofactor.

It is found in the cytoplasm. The enzyme catalyses Release of an N-terminal amino acid, Xaa-|-Yaa-, in which Xaa is preferably Leu, but may be other amino acids including Pro although not Arg or Lys, and Yaa may be Pro. Amino acid amides and methyl esters are also readily hydrolyzed, but rates on arylamides are exceedingly low.. It carries out the reaction Release of an N-terminal amino acid, preferentially leucine, but not glutamic or aspartic acids.. In terms of biological role, presumably involved in the processing and regular turnover of intracellular proteins. Catalyzes the removal of unsubstituted N-terminal amino acids from various peptides. The sequence is that of Probable cytosol aminopeptidase from Desulfotalea psychrophila (strain LSv54 / DSM 12343).